The following is a 284-amino-acid chain: 2-dehydro-3-deoxyphosphooctonate aldolase (284 aa).

Belongs to the KdsA family.

The protein localises to the cytoplasm. The enzyme catalyses D-arabinose 5-phosphate + phosphoenolpyruvate + H2O = 3-deoxy-alpha-D-manno-2-octulosonate-8-phosphate + phosphate. Its pathway is carbohydrate biosynthesis; 3-deoxy-D-manno-octulosonate biosynthesis; 3-deoxy-D-manno-octulosonate from D-ribulose 5-phosphate: step 2/3. The protein operates within bacterial outer membrane biogenesis; lipopolysaccharide biosynthesis. The protein is 2-dehydro-3-deoxyphosphooctonate aldolase of Haemophilus influenzae (strain 86-028NP).